Reading from the N-terminus, the 405-residue chain is NADH-quinone oxidoreductase subunit D (405 aa).

Belongs to the complex I 49 kDa subunit family. NDH-1 is composed of 14 different subunits. Subunits NuoB, C, D, E, F, and G constitute the peripheral sector of the complex.

Its subcellular location is the cell inner membrane. The enzyme catalyses a quinone + NADH + 5 H(+)(in) = a quinol + NAD(+) + 4 H(+)(out). NDH-1 shuttles electrons from NADH, via FMN and iron-sulfur (Fe-S) centers, to quinones in the respiratory chain. The immediate electron acceptor for the enzyme in this species is believed to be ubiquinone. Couples the redox reaction to proton translocation (for every two electrons transferred, four hydrogen ions are translocated across the cytoplasmic membrane), and thus conserves the redox energy in a proton gradient. The chain is NADH-quinone oxidoreductase subunit D from Leptospira borgpetersenii serovar Hardjo-bovis (strain L550).